Here is a 255-residue protein sequence, read N- to C-terminus: 14-3-3-like protein B (255 aa).

It belongs to the 14-3-3 family.

The sequence is that of 14-3-3-like protein B from Nicotiana tabacum (Common tobacco).